The sequence spans 270 residues: Cell surface glycoprotein CD200 receptor 4 (270 aa).

The first 25 residues, 1 to 25, serve as a signal peptide directing secretion; the sequence is MHALGRIPTLTLLIFINIFVSGSSC. One can recognise an Ig-like V-type domain in the interval 26 to 145; the sequence is TDENQTIQND…GNLEKVYDLQ (120 aa). Residues 26 to 241 are Extracellular-facing; that stretch reads TDENQTIQND…TMTTPRSLLT (216 aa). Residues asparagine 29 and asparagine 44 are each glycosylated (N-linked (GlcNAc...) asparagine). 4 disulfides stabilise this stretch: cysteine 58-cysteine 129, cysteine 82-cysteine 97, cysteine 164-cysteine 213, and cysteine 183-cysteine 201. In terms of domain architecture, Ig-like C2-type spans 134 to 229; it reads PEGNLEKVYD…GNQSLSIELS (96 aa). An N-linked (GlcNAc...) asparagine glycan is attached at asparagine 192. Residues 242-262 form a helical membrane-spanning segment; it reads ILYVKMALLVIILLNVGFAFF. The Cytoplasmic segment spans residues 263-270; that stretch reads QKRNFART.

The protein belongs to the CD200R family. Interacts with TYROBP. Highly expressed in monocytes, NK cells and a subset of NKT cells. Weakly expressed in granulocytes and B-cells (at protein level). Expressed in brain, lung, testis, thymus, intestine and uterus. Expressed in bone marrow derived-macrophage and dendritic cells and mast cells.

The protein localises to the membrane. Its function is as follows. Involved in the recruitment or surface expression of the TYROBP receptor. The sequence is that of Cell surface glycoprotein CD200 receptor 4 (Cd200r4) from Mus musculus (Mouse).